The primary structure comprises 129 residues: ATP synthase epsilon chain (129 aa).

Belongs to the ATPase epsilon chain family. F-type ATPases have 2 components, CF(1) - the catalytic core - and CF(0) - the membrane proton channel. CF(1) has five subunits: alpha(3), beta(3), gamma(1), delta(1), epsilon(1). CF(0) has three main subunits: a, b and c.

Its subcellular location is the cell inner membrane. Functionally, produces ATP from ADP in the presence of a proton gradient across the membrane. The polypeptide is ATP synthase epsilon chain (Campylobacter curvus (strain 525.92)).